The chain runs to 85 residues: Putative membrane protein insertion efficiency factor (85 aa).

Belongs to the UPF0161 family.

It is found in the cell membrane. In terms of biological role, could be involved in insertion of integral membrane proteins into the membrane. The sequence is that of Putative membrane protein insertion efficiency factor from Baumannia cicadellinicola subsp. Homalodisca coagulata.